Consider the following 250-residue polypeptide: Ribosomal RNA small subunit methyltransferase J (250 aa).

Residues 101 to 102 (RD), 117 to 118 (ER), 153 to 154 (SS), and aspartate 171 contribute to the S-adenosyl-L-methionine site.

The protein belongs to the methyltransferase superfamily. RsmJ family.

It localises to the cytoplasm. The enzyme catalyses guanosine(1516) in 16S rRNA + S-adenosyl-L-methionine = N(2)-methylguanosine(1516) in 16S rRNA + S-adenosyl-L-homocysteine + H(+). In terms of biological role, specifically methylates the guanosine in position 1516 of 16S rRNA. This chain is Ribosomal RNA small subunit methyltransferase J, found in Klebsiella pneumoniae (strain 342).